The chain runs to 238 residues: 7-cyano-7-deazaguanine synthase (238 aa).

Phenylalanine 14 to leucine 24 contacts ATP. The Zn(2+) site is built by cysteine 202, cysteine 217, cysteine 220, and cysteine 223.

Belongs to the QueC family. Zn(2+) is required as a cofactor.

The catalysed reaction is 7-carboxy-7-deazaguanine + NH4(+) + ATP = 7-cyano-7-deazaguanine + ADP + phosphate + H2O + H(+). Its pathway is purine metabolism; 7-cyano-7-deazaguanine biosynthesis. Its function is as follows. Catalyzes the ATP-dependent conversion of 7-carboxy-7-deazaguanine (CDG) to 7-cyano-7-deazaguanine (preQ(0)). This chain is 7-cyano-7-deazaguanine synthase, found in Nitrobacter hamburgensis (strain DSM 10229 / NCIMB 13809 / X14).